An 88-amino-acid polypeptide reads, in one-letter code: Small ribosomal subunit protein bS16c (88 aa).

The protein belongs to the bacterial ribosomal protein bS16 family.

It is found in the plastid. The protein resides in the chloroplast. This is Small ribosomal subunit protein bS16c from Sinapis alba (White mustard).